The primary structure comprises 100 residues: NADH-quinone oxidoreductase subunit K (100 aa).

3 consecutive transmembrane segments (helical) span residues 4–24, 29–49, and 60–80; these read TSYY…GVLL, IVVF…LVAF, and VIVF…LALL.

It belongs to the complex I subunit 4L family. NDH-1 is composed of 14 different subunits. Subunits NuoA, H, J, K, L, M, N constitute the membrane sector of the complex.

The protein resides in the cell membrane. It catalyses the reaction a quinone + NADH + 5 H(+)(in) = a quinol + NAD(+) + 4 H(+)(out). Functionally, NDH-1 shuttles electrons from NADH, via FMN and iron-sulfur (Fe-S) centers, to quinones in the respiratory chain. The immediate electron acceptor for the enzyme in this species is believed to be ubiquinone. Couples the redox reaction to proton translocation (for every two electrons transferred, four hydrogen ions are translocated across the cytoplasmic membrane), and thus conserves the redox energy in a proton gradient. This is NADH-quinone oxidoreductase subunit K from Chloroflexus aurantiacus (strain ATCC 29366 / DSM 635 / J-10-fl).